A 283-amino-acid chain; its full sequence is 5'-nucleotidase SurE (283 aa).

A divalent metal cation contacts are provided by aspartate 14, aspartate 15, serine 47, and asparagine 105.

The protein belongs to the SurE nucleotidase family. Requires a divalent metal cation as cofactor.

Its subcellular location is the cytoplasm. It catalyses the reaction a ribonucleoside 5'-phosphate + H2O = a ribonucleoside + phosphate. Functionally, nucleotidase that shows phosphatase activity on nucleoside 5'-monophosphates. The polypeptide is 5'-nucleotidase SurE (Chlamydia trachomatis serovar A (strain ATCC VR-571B / DSM 19440 / HAR-13)).